The chain runs to 273 residues: Glucosamine-6-phosphate deaminase (273 aa).

The active-site Proton acceptor; for enolization step is the D72. D141 functions as the For ring-opening step in the catalytic mechanism. Residue H143 is the Proton acceptor; for ring-opening step of the active site. Residue E148 is the For ring-opening step of the active site.

The protein belongs to the glucosamine/galactosamine-6-phosphate isomerase family. In terms of assembly, homohexamer.

It localises to the cytoplasm. It catalyses the reaction alpha-D-glucosamine 6-phosphate + H2O = beta-D-fructose 6-phosphate + NH4(+). It functions in the pathway nucleotide-sugar biosynthesis; UDP-N-acetyl-alpha-D-glucosamine biosynthesis; alpha-D-glucosamine 6-phosphate from D-fructose 6-phosphate: step 1/1. Functionally, catalyzes the reversible conversion of alpha-D-glucosamine 6-phosphate (GlcN-6P) into beta-D-fructose 6-phosphate (Fru-6P) and ammonium ion, a regulatory reaction step in de novo uridine diphosphate-N-acetyl-alpha-D-glucosamine (UDP-GlcNAc) biosynthesis via hexosamine pathway. The polypeptide is Glucosamine-6-phosphate deaminase (Gnpda1) (Anopheles gambiae (African malaria mosquito)).